A 334-amino-acid polypeptide reads, in one-letter code: E3 ubiquitin-protein ligase ATL4 (334 aa).

A disordered region spans residues 1–20 (MESLINPSHGGGNYDSHSSS). Residues 28–48 (VLVIILILLMTLLISVSICFL) form a helical membrane-spanning segment. The RING-type; atypical zinc-finger motif lies at 117-159 (CAVCLSKFEPEDQLRLLPLCCHAFHADCIDIWLVSNQTCPLCR).

This sequence belongs to the RING-type zinc finger family. ATL subfamily.

The protein localises to the membrane. It carries out the reaction S-ubiquitinyl-[E2 ubiquitin-conjugating enzyme]-L-cysteine + [acceptor protein]-L-lysine = [E2 ubiquitin-conjugating enzyme]-L-cysteine + N(6)-ubiquitinyl-[acceptor protein]-L-lysine.. It participates in protein modification; protein ubiquitination. In terms of biological role, E3 ubiquitin-protein ligase able to catalyze polyubiquitination with ubiquitin-conjugating enzyme E2 UBC8 in vitro. This is E3 ubiquitin-protein ligase ATL4 from Arabidopsis thaliana (Mouse-ear cress).